The chain runs to 526 residues: GMP synthase [glutamine-hydrolyzing] (526 aa).

Residues 9–208 (RILILDFGSQ…LVNICGCKQL (200 aa)) enclose the Glutamine amidotransferase type-1 domain. Cysteine 86 functions as the Nucleophile in the catalytic mechanism. Active-site residues include histidine 182 and glutamate 184. A GMPS ATP-PPase domain is found at 209-401 (WTPGRIIEDA…LGLPYDMVYR (193 aa)). 236–242 (SGGVDSS) provides a ligand contact to ATP.

In terms of assembly, homodimer.

It carries out the reaction XMP + L-glutamine + ATP + H2O = GMP + L-glutamate + AMP + diphosphate + 2 H(+). The protein operates within purine metabolism; GMP biosynthesis; GMP from XMP (L-Gln route): step 1/1. Its function is as follows. Catalyzes the synthesis of GMP from XMP. This is GMP synthase [glutamine-hydrolyzing] from Hahella chejuensis (strain KCTC 2396).